A 196-amino-acid polypeptide reads, in one-letter code: Carnitine operon protein CaiE (196 aa).

The tract at residues 173-196 (TQPLRQMEENRPRLQGTTDVTPKR) is disordered. Polar residues predominate over residues 187–196 (QGTTDVTPKR).

Belongs to the transferase hexapeptide repeat family.

The protein operates within amine and polyamine metabolism; carnitine metabolism. Functionally, overproduction of CaiE stimulates the activity of CaiB and CaiD. This chain is Carnitine operon protein CaiE, found in Escherichia coli O6:K15:H31 (strain 536 / UPEC).